Consider the following 226-residue polypeptide: Myosin regulatory light chain 10 (226 aa).

EF-hand domains are found at residues 84-119 (NSPA…LGRI), 154-189 (DPEE…QADR), and 190-225 (FSEE…GEEK). Ca(2+)-binding residues include D97, N99, D101, and D108.

Myosin is a hexamer of 2 heavy chains and 4 light chains.

The polypeptide is Myosin regulatory light chain 10 (MYL10) (Homo sapiens (Human)).